We begin with the raw amino-acid sequence, 332 residues long: Ferrochelatase (332 aa).

H201 and E283 together coordinate Fe cation.

Belongs to the ferrochelatase family.

Its subcellular location is the cytoplasm. It catalyses the reaction heme b + 2 H(+) = protoporphyrin IX + Fe(2+). It participates in porphyrin-containing compound metabolism; protoheme biosynthesis; protoheme from protoporphyrin-IX: step 1/1. Functionally, catalyzes the ferrous insertion into protoporphyrin IX. This is Ferrochelatase from Francisella tularensis subsp. holarctica (strain FTNF002-00 / FTA).